The following is a 386-amino-acid chain: Alpha-D-kanosaminyltransferase (386 aa).

Belongs to the glycosyltransferase group 1 family.

The catalysed reaction is 2'-deamino-2'-hydroxyneamine + UDP-alpha-D-kanosamine = kanamycin A + UDP + H(+). It carries out the reaction neamine + UDP-alpha-D-kanosamine = kanamycin B + UDP + H(+). It catalyses the reaction paromamine + UDP-alpha-D-kanosamine = kanamycin C + UDP + H(+). The enzyme catalyses 2'-deamino-2'-hydroxyparomamine + UDP-alpha-D-kanosamine = kanamycin X + UDP + H(+). It functions in the pathway antibiotic biosynthesis; kanamycin biosynthesis. Functionally, glycosyltransferase involved in the biosynthesis of kanamycins by catalyzing the transfer of the hexose kanosamine from UDP-alpha-D-kanosamine to disaccharide precursors. Can also use UDP-alpha-D-glucose as sugar donor with much lower efficiency. This is Alpha-D-kanosaminyltransferase (kanE) from Streptomyces kanamyceticus.